Here is a 51-residue protein sequence, read N- to C-terminus: MSHNMKGQKKRLAKAHKQNSRVPVWAIVKTNRKVVSHPRRRHWRRGSLDVK.

The span at 1-19 shows a compositional bias: basic residues; it reads MSHNMKGQKKRLAKAHKQN. Residues 1-23 are disordered; sequence MSHNMKGQKKRLAKAHKQNSRVP.

It belongs to the eukaryotic ribosomal protein eL39 family.

The chain is Large ribosomal subunit protein eL39 from Methanosarcina mazei (strain ATCC BAA-159 / DSM 3647 / Goe1 / Go1 / JCM 11833 / OCM 88) (Methanosarcina frisia).